A 532-amino-acid chain; its full sequence is Flavin-containing monooxygenase 1 (532 aa).

Over 1–510 (MVKRVAIVGA…TRTVQETPST (510 aa)) the chain is Lumenal. FAD contacts are provided by residues 9 to 13 (GAGVS), E32, 40 to 41 (LW), and 61 to 62 (NS). NADP(+) is bound by residues 60–61 (SN) and 195–198 (SGTD). The chain crosses the membrane as a helical span at residues 511 to 531 (FETLLKLFSFLALLVAVFFIF). L532 is a topological domain (cytoplasmic).

This sequence belongs to the FMO family. FAD serves as cofactor. In terms of tissue distribution, expressed in liver, lung and kidney and to a lesser extent in the heart and brain.

The protein resides in the endoplasmic reticulum membrane. It catalyses the reaction hypotaurine + NADPH + O2 + H(+) = taurine + NADP(+) + H2O. It carries out the reaction hypotaurine + NADH + O2 + H(+) = taurine + NAD(+) + H2O. The enzyme catalyses trimethylamine + NADPH + O2 = trimethylamine N-oxide + NADP(+) + H2O. The catalysed reaction is N,N-dimethylaniline + NADPH + O2 + H(+) = N,N-dimethylaniline N-oxide + NADP(+) + H2O. Functionally, broad spectrum monooxygenase that catalyzes the oxygenation of a wide variety of nitrogen- and sulfur-containing compounds including xenobiotics. Catalyzes the S-oxygenation of hypotaurine to produce taurine, an organic osmolyte involved in cell volume regulation as well as a variety of cytoprotective and developmental processes. In vitro, catalyzes the N-oxygenation of trimethylamine (TMA) to produce trimethylamine N-oxide (TMAO) and could therefore participate to the detoxification of this compound that is generated by the action of gut microbiota from dietary precursors such as choline, choline containing compounds, betaine or L-carnitine. The chain is Flavin-containing monooxygenase 1 from Rattus norvegicus (Rat).